The sequence spans 250 residues: 5-oxoprolinase subunit A (250 aa).

This sequence belongs to the LamB/PxpA family. In terms of assembly, forms a complex composed of PxpA, PxpB and PxpC.

It catalyses the reaction 5-oxo-L-proline + ATP + 2 H2O = L-glutamate + ADP + phosphate + H(+). In terms of biological role, catalyzes the cleavage of 5-oxoproline to form L-glutamate coupled to the hydrolysis of ATP to ADP and inorganic phosphate. This is 5-oxoprolinase subunit A from Staphylococcus aureus (strain MRSA252).